A 466-amino-acid chain; its full sequence is Cysteine--tRNA ligase (466 aa).

Position 30 (Cys30) interacts with Zn(2+). Residues 32–42 carry the 'HIGH' region motif; that stretch reads PTVYNYIHIGN. 3 residues coordinate Zn(2+): Cys210, His235, and Glu239. The 'KMSKS' region signature appears at 267–271; it reads KMSKS. Lys270 provides a ligand contact to ATP. Ser271 carries the phosphoserine modification.

This sequence belongs to the class-I aminoacyl-tRNA synthetase family. In terms of assembly, monomer. It depends on Zn(2+) as a cofactor.

The protein localises to the cytoplasm. The catalysed reaction is tRNA(Cys) + L-cysteine + ATP = L-cysteinyl-tRNA(Cys) + AMP + diphosphate. This is Cysteine--tRNA ligase from Geobacillus sp. (strain WCH70).